A 977-amino-acid polypeptide reads, in one-letter code: Poly [ADP-ribose] polymerase 1 (977 aa).

PARP-type zinc fingers lie at residues 8–91 (WKAE…GSAP) and 104–179 (CTIE…KKDA). Positions 20, 23, 52, 55, 116, 119, 141, and 144 each coordinate Zn(2+). 2 disordered regions span residues 177 to 199 (KDAPSSGQTSSKGSKRKNNQNDI) and 218 to 237 (DKGKAVVSHDSNANSSDLQE). The region spanning 227-365 (DSNANSSDLQ…AKKPERVLPP (139 aa)) is the PADR1 zinc-binding domain. An SAP domain is found at 254-288 (KKHVSTAELRNMLEANGQDTSGPERHLLDRCADGM). The tract at residues 291–335 (GALGTCPVCSSFLYYHGGQYHCSGYVSEWSKCTYSTTEPVRSKKK) is zinc ribbon. The Zn(2+) site is built by cysteine 296, cysteine 299, cysteine 312, and cysteine 322. One can recognise a BRCT domain in the interval 381-473 (SFLSEGLDKL…RVLPFDLYKV (93 aa)). Residues 504-604 (TGHILEDGKS…TNFQKQPGKF (101 aa)) enclose the WGR domain. The PARP alpha-helical domain occupies 626-745 (KSSLPPQLLE…DIEIASKLVG (120 aa)). Residues 752–977 (ESLDDKYKKL…LLKVRFHHKR (226 aa)) enclose the PARP catalytic domain.

Belongs to the ARTD/PARP family.

The protein localises to the nucleus. The enzyme catalyses NAD(+) + (ADP-D-ribosyl)n-acceptor = nicotinamide + (ADP-D-ribosyl)n+1-acceptor + H(+).. The catalysed reaction is L-aspartyl-[protein] + NAD(+) = 4-O-(ADP-D-ribosyl)-L-aspartyl-[protein] + nicotinamide. It carries out the reaction L-glutamyl-[protein] + NAD(+) = 5-O-(ADP-D-ribosyl)-L-glutamyl-[protein] + nicotinamide. In terms of biological role, involved in the base excision repair (BER) pathway, by catalyzing the poly(ADP-ribosyl)ation of a limited number of acceptor proteins involved in chromatin architecture and in DNA metabolism. This modification follows DNA damages and appears as an obligatory step in a detection/signaling pathway leading to the reparation of DNA strand breaks. This chain is Poly [ADP-ribose] polymerase 1 (PARP1), found in Oryza sativa subsp. japonica (Rice).